The primary structure comprises 666 residues: ATP-dependent RNA helicase MSS116, mitochondrial (666 aa).

A mitochondrion-targeting transit peptide spans 1-22; the sequence is MLRHCSLGLVTTQISAIAPLRL. The span at 38-60 shows a compositional bias: basic and acidic residues; it reads RDRRSSRSREDKPYNSRTRRFDD. The interval 38–131 is disordered; the sequence is RDRRSSRSRE…KSYSKGGNTS (94 aa). Polar residues predominate over residues 120–131; sequence NTKSYSKGGNTS. A Q motif motif is present at residues 159-187; sequence SLLEKNVISRDLYDSISRMGFEQLTPVQQ. Residues 192-379 enclose the Helicase ATP-binding domain; it reads PIITNSDSDI…NDIMNKEECL (188 aa). 205 to 212 contributes to the ATP binding site; the sequence is AKTGTGKT. A DEAD box motif is present at residues 320–323; it reads DEAD. The Helicase C-terminal domain occupies 408–560; sequence NLYAAIEHIR…NIRKFEAQPH (153 aa).

This sequence belongs to the DEAD box helicase family. DDX18/HAS1 subfamily.

The protein localises to the mitochondrion matrix. It catalyses the reaction ATP + H2O = ADP + phosphate + H(+). Functionally, ATP-dependent RNA helicase required for mitochondrial splicing of group I and II introns. Also required for efficient mitochondrial translation. The sequence is that of ATP-dependent RNA helicase MSS116, mitochondrial (MSS116) from Candida glabrata (strain ATCC 2001 / BCRC 20586 / JCM 3761 / NBRC 0622 / NRRL Y-65 / CBS 138) (Yeast).